Consider the following 244-residue polypeptide: 5-oxoprolinase subunit A (244 aa).

The protein belongs to the LamB/PxpA family. Forms a complex composed of PxpA, PxpB and PxpC.

The enzyme catalyses 5-oxo-L-proline + ATP + 2 H2O = L-glutamate + ADP + phosphate + H(+). Its function is as follows. Catalyzes the cleavage of 5-oxoproline to form L-glutamate coupled to the hydrolysis of ATP to ADP and inorganic phosphate. This chain is 5-oxoprolinase subunit A, found in Salmonella choleraesuis (strain SC-B67).